Here is a 377-residue protein sequence, read N- to C-terminus: Succinyl-diaminopimelate desuccinylase (377 aa).

His-67 is a binding site for Zn(2+). Asp-69 is a catalytic residue. Residue Asp-100 participates in Zn(2+) binding. The active-site Proton acceptor is the Glu-134. Zn(2+) is bound by residues Glu-135, Glu-163, and His-349.

It belongs to the peptidase M20A family. DapE subfamily. Homodimer. The cofactor is Zn(2+). Requires Co(2+) as cofactor.

It carries out the reaction N-succinyl-(2S,6S)-2,6-diaminopimelate + H2O = (2S,6S)-2,6-diaminopimelate + succinate. It participates in amino-acid biosynthesis; L-lysine biosynthesis via DAP pathway; LL-2,6-diaminopimelate from (S)-tetrahydrodipicolinate (succinylase route): step 3/3. In terms of biological role, catalyzes the hydrolysis of N-succinyl-L,L-diaminopimelic acid (SDAP), forming succinate and LL-2,6-diaminopimelate (DAP), an intermediate involved in the bacterial biosynthesis of lysine and meso-diaminopimelic acid, an essential component of bacterial cell walls. The polypeptide is Succinyl-diaminopimelate desuccinylase (Buchnera aphidicola subsp. Baizongia pistaciae (strain Bp)).